A 513-amino-acid chain; its full sequence is TRAF3-interacting JNK-activating modulator (513 aa).

Disordered stretches follow at residues 1-96, 130-171, and 381-402; these read MISS…GQVS, SSGI…KAEE, and SLQG…QLKK. Over 1–485 the chain is Cytoplasmic; that stretch reads MISSDSRSSP…QLQVKENELQ (485 aa). Composition is skewed to basic and acidic residues over residues 17–31 and 69–79; these read ESYE…ETRE and RNLEEEKKGQA. Residues 266–488 adopt a coiled-coil conformation; that stretch reads MKKVLLEMED…VKENELQCGQ (223 aa). The segment covering 386-397 has biased composition (polar residues); that stretch reads GEQQSSETQDLQ. Residues 486–506 form a helical; Anchor for type IV membrane protein membrane-spanning segment; the sequence is CGQWLPVLMVVIATALAVFLA. The Extracellular portion of the chain corresponds to 507–513; sequence NKGNLVI.

Interacts (via its coiled-coil domain) with TRAF3 (via isoleucine zipper). Interacts with MAP2K1. Interacts with PPP2CA; this interaction targets PPP2CA to the lysosomes. Interacts with MAVS. Interacts with TBK1. In terms of tissue distribution, expressed in bone marrow, spleen and thymus. Not detected in heart, kidney and liver.

The protein resides in the cell membrane. It localises to the golgi apparatus membrane. The protein localises to the lysosome membrane. Its subcellular location is the mitochondrion outer membrane. In terms of biological role, adapter protein that plays essential roles in both innate and adaptive immunity. Plays a crucial role in the regulation of thymocyte development. Mechanistically, mediates TCR-stimulated activation through recruiting MAP2K1/MEK1 to the Golgi and, thereby, facilitating the interaction of MAP2K1/MEK1 with its activator BRAF. Also plays an essential role in regulatory T-cell stability and function by recruiting the serine-threonine phosphatase catalytic subunit (PPP2CA) to the lysosome, thereby facilitating the interaction of PP2Ac with the mTORC1 component RPTOR and restricting glycolytic metabolism. Positively regulates TLR4 signaling activity in macrophage-mediated inflammation by acting as a molecular clamp to facilitate LPS-induced translocation of TLR4 to lipid rafts. In response to viral infection, facilitates the recruitment of TRAF3 to MAVS within mitochondria leading to IRF3 activation and interferon production. However, participates in the maintenance of immune homeostasis and the prevention of overzealous innate immunity by promoting 'Lys-48'-dependent ubiquitination of TBK1. The sequence is that of TRAF3-interacting JNK-activating modulator (Traf3ip3) from Mus musculus (Mouse).